We begin with the raw amino-acid sequence, 508 residues long: Histidine ammonia-lyase (508 aa).

The 5-imidazolinone (Ala-Gly) cross-link spans 139–141 (ASG). S140 bears the 2,3-didehydroalanine (Ser) mark.

Belongs to the PAL/histidase family. Contains an active site 4-methylidene-imidazol-5-one (MIO), which is formed autocatalytically by cyclization and dehydration of residues Ala-Ser-Gly.

It is found in the cytoplasm. The catalysed reaction is L-histidine = trans-urocanate + NH4(+). It participates in amino-acid degradation; L-histidine degradation into L-glutamate; N-formimidoyl-L-glutamate from L-histidine: step 1/3. This chain is Histidine ammonia-lyase, found in Acidiphilium cryptum (strain JF-5).